A 94-amino-acid chain; its full sequence is Aspartyl/glutamyl-tRNA(Asn/Gln) amidotransferase subunit C (94 aa).

Belongs to the GatC family. As to quaternary structure, heterotrimer of A, B and C subunits.

The enzyme catalyses L-glutamyl-tRNA(Gln) + L-glutamine + ATP + H2O = L-glutaminyl-tRNA(Gln) + L-glutamate + ADP + phosphate + H(+). The catalysed reaction is L-aspartyl-tRNA(Asn) + L-glutamine + ATP + H2O = L-asparaginyl-tRNA(Asn) + L-glutamate + ADP + phosphate + 2 H(+). Functionally, allows the formation of correctly charged Asn-tRNA(Asn) or Gln-tRNA(Gln) through the transamidation of misacylated Asp-tRNA(Asn) or Glu-tRNA(Gln) in organisms which lack either or both of asparaginyl-tRNA or glutaminyl-tRNA synthetases. The reaction takes place in the presence of glutamine and ATP through an activated phospho-Asp-tRNA(Asn) or phospho-Glu-tRNA(Gln). This chain is Aspartyl/glutamyl-tRNA(Asn/Gln) amidotransferase subunit C, found in Campylobacter jejuni subsp. jejuni serotype O:6 (strain 81116 / NCTC 11828).